A 122-amino-acid chain; its full sequence is Large ribosomal subunit protein bL12 (122 aa).

It belongs to the bacterial ribosomal protein bL12 family. Homodimer. Part of the ribosomal stalk of the 50S ribosomal subunit. Forms a multimeric L10(L12)X complex, where L10 forms an elongated spine to which 2 to 4 L12 dimers bind in a sequential fashion. Binds GTP-bound translation factors.

Forms part of the ribosomal stalk which helps the ribosome interact with GTP-bound translation factors. Is thus essential for accurate translation. The chain is Large ribosomal subunit protein bL12 from Staphylococcus aureus (strain Mu50 / ATCC 700699).